Here is a 188-residue protein sequence, read N- to C-terminus: Elongation factor P 1 (188 aa).

Belongs to the elongation factor P family.

It localises to the cytoplasm. It participates in protein biosynthesis; polypeptide chain elongation. Its function is as follows. Involved in peptide bond synthesis. Stimulates efficient translation and peptide-bond synthesis on native or reconstituted 70S ribosomes in vitro. Probably functions indirectly by altering the affinity of the ribosome for aminoacyl-tRNA, thus increasing their reactivity as acceptors for peptidyl transferase. The polypeptide is Elongation factor P 1 (Mesorhizobium japonicum (strain LMG 29417 / CECT 9101 / MAFF 303099) (Mesorhizobium loti (strain MAFF 303099))).